A 2193-amino-acid chain; its full sequence is Highly reducing polyketide synthase VdtX (2193 aa).

Positions 1-417 constitute a Ketosynthase family 3 (KS3) domain; that stretch reads MAICGIAVRL…GVNAHVIIES (417 aa). Active-site for beta-ketoacyl synthase activity residues include C170, H306, and H340. The segment at 513–809 is malonyl-CoA:ACP transacylase (MAT) domain; it reads VFAGQGAQWP…HPYVPCLIRF (297 aa). The N-terminal hotdog fold stretch occupies residues 877-1001; it reads HELLGTRVVD…GEVAQENLSR (125 aa). Residues 877–1128 form a dehydratase (DH) domain region; sequence HELLGTRVVD…DIVLRPLGAN (252 aa). Residues 877–1202 enclose the PKS/mFAS DH domain; the sequence is HELLGTRVVD…LQRQPKPSSE (326 aa). Residue H909 is the Proton acceptor; for dehydratase activity of the active site. Positions 1032–1202 are C-terminal hotdog fold; it reads SVTSNTVSGR…LQRQPKPSSE (171 aa). The Proton donor; for dehydratase activity role is filled by D1093. The methyltransferase (CMet) domain stretch occupies residues 1256 to 1390; the sequence is NYLNEPQQRI…DRWDSILKAA (135 aa). Positions 1575–1783 are enoyl reductase (ER) domain; it reads GQQVQLLGDD…SGQHIGQLRL (209 aa). Residues 1807-1981 are ketoreductase (KR) domain; it reads ASYLLVGGLG…ASVIDIGEVQ (175 aa). The region spanning 2102-2183 is the Carrier domain; the sequence is PSATQFVSLE…AMGEHVIREL (82 aa). Residue S2143 is modified to O-(pantetheine 4'-phosphoryl)serine.

In terms of biological role, highly reducing polyketide synthase; part of the gene cluster that mediates the biosynthesis of viriditoxin, one of the 'classical' secondary metabolites produced by fungi and that has antibacterial activity. The first step is performed by the polyketide synthase VdtA which condenses one acetyl-CoA and 6 malonyl-CoA units to form the heptaketide monomer backbone of viriditoxin. The product of VdtA is then O-methylated on C7 by the O-methyltransferase VdtC. The O-methyl group is important for the stereoselective coupling of the monomers at the final step of viriditoxin biosynthesis. The short-chain dehydrogenase/reductase VdtF is involved in the reduction of the C3-C4 double bond. The FAD-binding monooxygenase VdtE then converts the ketone group into a methyl-ester group to yield semi-viriditoxin. Finally, the laccase VdtB is involved in dimerization of 2 semi-viriditoxin molecules to yield the final viriditoxin. The non-catalytic carboxylesterase-like protein VdtD affects the stereochemistical outcome of the coupling. The highly reducing polyketide synthase VdtX is not involved in viriditoxin synthesis, but might possibly play a role in the production of additional metabolites not identified yet. The chain is Highly reducing polyketide synthase VdtX from Byssochlamys spectabilis (Paecilomyces variotii).